Reading from the N-terminus, the 185-residue chain is MLTQPINLPKWLEENSHLLKPPINNYCVYNEGFTVMIVGGPNARTDYHINQTPEWFYQHRGAMLLKIVDPTDNNTFKDIIIRQGDMFLLPPNTPHNPVRFADTVGIVLEQERPEGSIDRMRWYCQSCKEIVHEASFHCTDLGTQIKAAVEAFKEDEEKRTCKKCGEVAAWKPAEGSLKDPNLEEA.

O2 is bound at residue R44. 3 residues coordinate Fe cation: H48, E54, and H95. Residue E54 coordinates substrate. The substrate site is built by R99 and E109. Residues C124, C127, C161, and C164 each coordinate a divalent metal cation.

It belongs to the 3-HAO family. Fe(2+) serves as cofactor.

It localises to the cytoplasm. The enzyme catalyses 3-hydroxyanthranilate + O2 = (2Z,4Z)-2-amino-3-carboxymuconate 6-semialdehyde. The protein operates within cofactor biosynthesis; NAD(+) biosynthesis; quinolinate from L-kynurenine: step 3/3. Its function is as follows. Catalyzes the oxidative ring opening of 3-hydroxyanthranilate to 2-amino-3-carboxymuconate semialdehyde, which spontaneously cyclizes to quinolinate. The polypeptide is 3-hydroxyanthranilate 3,4-dioxygenase (Podospora anserina (strain S / ATCC MYA-4624 / DSM 980 / FGSC 10383) (Pleurage anserina)).